Here is a 508-residue protein sequence, read N- to C-terminus: Phosphoglycerate kinase A (508 aa).

Residues V32, D33, F34, N35, R48, S70, H71, G73, R74, R224, H260, and R261 each coordinate (2R)-3-phosphoglycerate. G306 and A307 together coordinate ADP. CDP is bound at residue G306. A307 and K308 together coordinate AMP. Position 307 (A307) interacts with ATP. A307 contributes to the Mg(2+) binding site. A (2R)-3-phosphoglycerate-binding site is contributed by K308. E311 contacts CDP. E311 contacts Mg(2+). Residues K312 and G330 each contribute to the ADP site. K312 is a binding site for AMP. K312 contacts ATP. G330 contributes to the CDP binding site. Positions 331 and 403 each coordinate AMP. ATP contacts are provided by A331 and A403. 2 residues coordinate ADP: A403 and N427. CDP-binding residues include G428 and F433. ADP contacts are provided by F433, E434, E466, and S467. Residue E434 coordinates AMP. 3 residues coordinate ATP: E434, E466, and S467. E466 contacts Mg(2+).

The protein belongs to the phosphoglycerate kinase family. As to quaternary structure, monomer. Mg(2+) serves as cofactor.

It carries out the reaction (2R)-3-phosphoglycerate + ATP = (2R)-3-phospho-glyceroyl phosphate + ADP. Its pathway is carbohydrate degradation; glycolysis; pyruvate from D-glyceraldehyde 3-phosphate: step 2/5. This chain is Phosphoglycerate kinase A, found in Trypanosoma brucei brucei.